We begin with the raw amino-acid sequence, 138 residues long: Transcription antitermination protein NusB (138 aa).

It belongs to the NusB family.

In terms of biological role, involved in transcription antitermination. Required for transcription of ribosomal RNA (rRNA) genes. Binds specifically to the boxA antiterminator sequence of the ribosomal RNA (rrn) operons. This Yersinia enterocolitica serotype O:8 / biotype 1B (strain NCTC 13174 / 8081) protein is Transcription antitermination protein NusB.